The primary structure comprises 72 residues: Alpha-conotoxin SII (72 aa).

An N-terminal signal peptide occupies residues 1-21 (MGMRMMFTVFLLVVLATTVVS). Positions 22–50 (FPSDRASDGRDDEAKDERSDMHESDRNGR) are excised as a propeptide. Residues 23 to 51 (PSDRASDGRDDEAKDERSDMHESDRNGRG) are disordered. Positions 26-49 (RASDGRDDEAKDERSDMHESDRNG) are enriched in basic and acidic residues. 3 disulfides stabilise this stretch: C52–C68, C53–C58, and C54–C64. The propeptide occupies 70 to 72 (RTL).

Belongs to the conotoxin A superfamily. Post-translationally, the disulfide bond Cys-52-Cys-68 (Cys I-VI), which corresponds to an extra disulfide bond when compared to the cysteine framework I (CC-C-C), does contribute to conotoxin SII stability and imparts a unique binding mode at the nAChR. In terms of tissue distribution, expressed by the venom duct.

The protein resides in the secreted. Alpha-conotoxins act on postsynaptic membranes, they bind to the nicotinic acetylcholine receptors (nAChR) and thus inhibit them. This toxin potently inhibits the rodent muscle nAChR (IC(50)=120 nM (adult subtype, alpha-1-beta-1-delta-epsilon/CHRNA1-CHRNB1-CHRND-CHRNE) and IC(50)=370 nM (fetal subtype, alpha-1-beta-1-gamma-delta/CHRNA1-CHRNB1-CHRNG-CHRND)) and weakly inhibits neuronal nAChRs. In contrast to alpha-conotoxins bearing 2 disulfide bonds (framework I), this conotoxin acts via a unique binding mode with the helix and the N- and C-termini buried in the binding pocket of muscle nAChRs. The polypeptide is Alpha-conotoxin SII (Conus striatus (Striated cone)).